The primary structure comprises 89 residues: Small ribosomal subunit protein bS16 (89 aa).

The protein belongs to the bacterial ribosomal protein bS16 family.

The sequence is that of Small ribosomal subunit protein bS16 from Psychrobacter arcticus (strain DSM 17307 / VKM B-2377 / 273-4).